The sequence spans 90 residues: Probable Fe(2+)-trafficking protein (90 aa).

Belongs to the Fe(2+)-trafficking protein family.

Could be a mediator in iron transactions between iron acquisition and iron-requiring processes, such as synthesis and/or repair of Fe-S clusters in biosynthetic enzymes. The protein is Probable Fe(2+)-trafficking protein of Paraburkholderia xenovorans (strain LB400).